The following is a 731-amino-acid chain: E3 ubiquitin-protein ligase COP1 (731 aa).

Residues 1–40 (MSGSRQAGSGSAGTSPGSSAASSVTSASSSLSSSPSPPSV) are disordered. Residues 109-113 (GSRKR) carry the Nuclear localization signal 1 motif. The RING-type zinc finger occupies 136-174 (CPICFDMIEEAYMTKCGHSFCYKCIHQSLEDNNRCPKCN). The short motif at 195–206 (KQKQRFEEKRFK) is the Nuclear localization signal 2 element. Positions 233–301 (LDLANVNLML…DIKRVEEMSG (69 aa)) form a coiled coil. Residues 235–245 (LANVNLMLELL) carry the Nuclear export signal motif. The tract at residues 305–325 (PVSEDSTVPQFEAPSPSHSSI) is disordered. WD repeat units follow at residues 419-458 (NGSSIVSSIEFDRDCDYFAIAGVTKKIKVYEYDTVIQDAV), 468-508 (TCNS…RSKV), 511-551 (EHEK…SVAS), 553-593 (EAKA…QPIM), 597-635 (GHRKAVSYAKFVSGEEIVSASTDSQLKLWNVGKPYCLRS), 638-677 (GHINEKNFVGLASNGDYIACGSENNSLYLYYKGLSKTLLT), and 691-729 (RKEDDTNEFVSAVCWRALPDGESNVLIAANSQGTIKVLE). The tract at residues 643–645 (KNF) is interaction with TRIB1.

The protein belongs to the COP1 family. As to quaternary structure, homodimer. Homodimerization is mediated by the coiled coil domain. Component of the DCX DET1-COP1 ubiquitin ligase complex at least composed of RBX1, DET1, DDB1, CUL4A and COP1. Isoform 2 does not interact with CUL4A but still binds to RBX1, suggesting that the interaction may be mediated by another cullin protein. Isoform 1 and isoform 2 interact with CUL5 but not with CUL1, CUL2 not CUL3. Interacts with bZIP transcription factors JUN, JUNB and JUND but not with FOS, ATF2 nor XBP1. Interacts with p53 (TP53). Interacts with COPS6; this interaction stabilizes RFWD2 through reducing its auto-ubiquitination and decelerating its turnover rate. Interacts with SFN; this interaction leads to SFN degradation. Isoform 4 forms heterodimers with isoform 1, preventing its association with DET1. Interacts with p53/TP53 and MTA1. Interacts with TRIB1 (via C-terminus) and TRIB2. In terms of processing, autoubiquitinated. MTA1 destabilizes it by promoting its autoubiquitination. In terms of tissue distribution, ubiquitously expressed at low level. Expressed at higher level in testis, placenta, skeletal muscle and heart.

It localises to the nucleus speckle. It is found in the cytoplasm. The catalysed reaction is S-ubiquitinyl-[E2 ubiquitin-conjugating enzyme]-L-cysteine + [acceptor protein]-L-lysine = [E2 ubiquitin-conjugating enzyme]-L-cysteine + N(6)-ubiquitinyl-[acceptor protein]-L-lysine.. It functions in the pathway protein modification; protein ubiquitination. With respect to regulation, TRIB1 competes with substrates for RFWD2 binding. Functionally, E3 ubiquitin-protein ligase that mediates ubiquitination and subsequent proteasomal degradation of target proteins. E3 ubiquitin ligases accept ubiquitin from an E2 ubiquitin-conjugating enzyme in the form of a thioester and then directly transfers the ubiquitin to targeted substrates. Involved in JUN ubiquitination and degradation. Directly involved in p53 (TP53) ubiquitination and degradation, thereby abolishing p53-dependent transcription and apoptosis. Ubiquitinates p53 independently of MDM2 or RCHY1. Probably mediates E3 ubiquitin ligase activity by functioning as the essential RING domain subunit of larger E3 complexes. In contrast, it does not constitute the catalytic RING subunit in the DCX DET1-COP1 complex that negatively regulates JUN, the ubiquitin ligase activity being mediated by RBX1. Involved in 14-3-3 protein sigma/SFN ubiquitination and proteasomal degradation, leading to AKT activation and promotion of cell survival. Ubiquitinates MTA1 leading to its proteasomal degradation. Upon binding to TRIB1, ubiquitinates CEBPA, which lacks a canonical COP1-binding motif. The sequence is that of E3 ubiquitin-protein ligase COP1 from Homo sapiens (Human).